The chain runs to 422 residues: Roquefortine prenyltransferase roqD (422 aa).

Glu-100 is a binding site for substrate. 3 residues coordinate dimethylallyl diphosphate: Arg-113, Lys-200, and Tyr-202. Tyr-204 serves as a coordination point for substrate. Lys-268, Tyr-270, Tyr-353, Tyr-416, and Tyr-420 together coordinate dimethylallyl diphosphate.

The protein belongs to the tryptophan dimethylallyltransferase family.

It participates in alkaloid biosynthesis. In terms of biological role, roquefortine prenyltransferase; part of the gene cluster that mediates the biosynthesis of the mycotoxins roquefortine C and meleagrin. The first stage is catalyzed by the dipeptide synthase roqA which condenses histidine and tryptophan to produce histidyltryptophanyldiketopiperazine (HTD). HTD is then converted to roquefortine C through two possible pathways. In the first pathway, prenyltransferase roqD transforms HTD to the intermediate roquefortine D, which is in turn converted to roquefortine C by the cytochrome P450 monooxygenase roqR. In the second pathway, HTD is first converted to the intermediate dehydrohistidyltryptophanyldi-ketopiperazine (DHTD) by roqR which is then prenylated by roqD to form roquefortine C. Roquefortine C can be further transformed to meleagrin via three more reactions including oxydation to glandicolin A by roqM, which is further reduced to glandicoline B by roqO. Finally, glandicoline B is converted to meleagrin by the glandicoline B O-methyltransferase roqN. More studies identified further branching and additional metabolites produced by the roquefortine/meleagrin cluster, including roquefortine F, roquefortine L, roquefortine M, roquefortine N and neoxaline. This Penicillium rubens (strain ATCC 28089 / DSM 1075 / NRRL 1951 / Wisconsin 54-1255) (Penicillium chrysogenum) protein is Roquefortine prenyltransferase roqD.